Consider the following 257-residue polypeptide: Thiazole synthase (257 aa).

Catalysis depends on Lys-100, which acts as the Schiff-base intermediate with DXP. Residues Gly-161, Ala-187–Gly-188, and Asn-209–Thr-210 contribute to the 1-deoxy-D-xylulose 5-phosphate site.

Belongs to the ThiG family. As to quaternary structure, homotetramer. Forms heterodimers with either ThiH or ThiS.

It is found in the cytoplasm. The catalysed reaction is [ThiS sulfur-carrier protein]-C-terminal-Gly-aminoethanethioate + 2-iminoacetate + 1-deoxy-D-xylulose 5-phosphate = [ThiS sulfur-carrier protein]-C-terminal Gly-Gly + 2-[(2R,5Z)-2-carboxy-4-methylthiazol-5(2H)-ylidene]ethyl phosphate + 2 H2O + H(+). It participates in cofactor biosynthesis; thiamine diphosphate biosynthesis. Catalyzes the rearrangement of 1-deoxy-D-xylulose 5-phosphate (DXP) to produce the thiazole phosphate moiety of thiamine. Sulfur is provided by the thiocarboxylate moiety of the carrier protein ThiS. In vitro, sulfur can be provided by H(2)S. This Pelagibacter ubique (strain HTCC1062) protein is Thiazole synthase.